A 423-amino-acid chain; its full sequence is Serine hydroxymethyltransferase (423 aa).

(6S)-5,6,7,8-tetrahydrofolate-binding positions include L118 and 122 to 124 (GHL). K227 carries the post-translational modification N6-(pyridoxal phosphate)lysine. 351–353 (SPF) lines the (6S)-5,6,7,8-tetrahydrofolate pocket.

This sequence belongs to the SHMT family. In terms of assembly, homodimer. Requires pyridoxal 5'-phosphate as cofactor.

Its subcellular location is the cytoplasm. The catalysed reaction is (6R)-5,10-methylene-5,6,7,8-tetrahydrofolate + glycine + H2O = (6S)-5,6,7,8-tetrahydrofolate + L-serine. The protein operates within one-carbon metabolism; tetrahydrofolate interconversion. It participates in amino-acid biosynthesis; glycine biosynthesis; glycine from L-serine: step 1/1. Catalyzes the reversible interconversion of serine and glycine with tetrahydrofolate (THF) serving as the one-carbon carrier. This reaction serves as the major source of one-carbon groups required for the biosynthesis of purines, thymidylate, methionine, and other important biomolecules. Also exhibits THF-independent aldolase activity toward beta-hydroxyamino acids, producing glycine and aldehydes, via a retro-aldol mechanism. The polypeptide is Serine hydroxymethyltransferase (Petrotoga mobilis (strain DSM 10674 / SJ95)).